A 212-amino-acid polypeptide reads, in one-letter code: External core antigen (212 aa).

A signal peptide spans 1–19 (MQLFHLCLIISCSCPTVQA). The HBEAG stretch occupies residues 25–27 (GWL). The interval 172–212 (LPETAVVRRRGRSPRRRTPSPRRRRSQSPRRRRSQSPASQC) is disordered. Positions 178–205 (VRRRGRSPRRRTPSPRRRRSQSPRRRRS) are enriched in basic residues. The 1; half-length repeat unit spans residues 184–190 (SPRRRTP). Positions 184-206 (SPRRRTPSPRRRRSQSPRRRRSQ) are 3 X 8 AA repeats of S-P-R-R-R-R-S-Q. Residues 184–212 (SPRRRTPSPRRRRSQSPRRRRSQSPASQC) constitute a propeptide that is removed on maturation. Repeat copies occupy residues 191–198 (SPRRRRSQ) and 199–206 (SPRRRRSQ).

It belongs to the orthohepadnavirus precore antigen family. Homodimerizes. Post-translationally, phosphorylated. In terms of processing, cleaved by host furin.

The protein localises to the secreted. Its subcellular location is the host nucleus. May regulate immune response to the intracellular capsid in acting as a T-cell tolerogen, by having an immunoregulatory effect which prevents destruction of infected cells by cytotoxic T-cells. This immune regulation may predispose to chronicity during perinatal infections and prevent severe liver injury during adult infections. The polypeptide is External core antigen (Gorilla gorilla (western gorilla)).